A 481-amino-acid polypeptide reads, in one-letter code: Sphingosine kinase 2 (481 aa).

A DAGKc domain is found at Gly-111–Asn-253. ATP is bound by residues Asn-121–Phe-123 and Thr-153. Ser-178–Gly-181 is a substrate binding site. The active-site Proton donor/acceptor is the Asp-180. ATP is bound by residues Glu-185 and Gly-210–Gly-212. Asp-271 contacts substrate. ATP contacts are provided by residues Arg-278, Arg-284, and Asp-441 to Glu-443.

Requires Mg(2+) as cofactor. Highly expressed in flowers and siliques and at lower levels in roots, leaves and stems.

It is found in the vacuole membrane. It carries out the reaction a sphingoid base + ATP = a sphingoid 1-phosphate + ADP + H(+). With respect to regulation, activated by phosphatidic acid (PA). Binding with PA stimulates the activity by promoting the binding of substrate to the catalytic site. In terms of biological role, involved in the production of sphingolipid metabolites. Phosphorylates sphingosine and various l sphingoid long-chain base (LCB) products, such as phytosphingosine (PHS, 4-hydroxysphinganine), 4-hydroxy-8-sphingenine, 4,8-sphingadienine and D-erythro-dihydrosphingosine, but has a very few activity toward D,L-threo- dihydrosphingosine. Is required for abscisic acid (ABA) signaling that mediates stomatal closure, inhibition of seed germination and root elongation. May function upstream of PLDALPHA1 and phosphatidic acid (PA) in an amplification response to ABA that mediates stomatal closure. This Arabidopsis thaliana (Mouse-ear cress) protein is Sphingosine kinase 2 (SPHK2).